The sequence spans 160 residues: NADH-quinone oxidoreductase subunit B (160 aa).

Residues cysteine 37, cysteine 38, cysteine 102, and cysteine 132 each coordinate [4Fe-4S] cluster.

It belongs to the complex I 20 kDa subunit family. As to quaternary structure, NDH-1 is composed of 14 different subunits. Subunits NuoB, C, D, E, F, and G constitute the peripheral sector of the complex. Requires [4Fe-4S] cluster as cofactor.

Its subcellular location is the cell membrane. It catalyses the reaction a quinone + NADH + 5 H(+)(in) = a quinol + NAD(+) + 4 H(+)(out). Its function is as follows. NDH-1 shuttles electrons from NADH, via FMN and iron-sulfur (Fe-S) centers, to quinones in the respiratory chain. Couples the redox reaction to proton translocation (for every two electrons transferred, four hydrogen ions are translocated across the cytoplasmic membrane), and thus conserves the redox energy in a proton gradient. This Polynucleobacter asymbioticus (strain DSM 18221 / CIP 109841 / QLW-P1DMWA-1) (Polynucleobacter necessarius subsp. asymbioticus) protein is NADH-quinone oxidoreductase subunit B.